The following is a 176-amino-acid chain: Transmembrane protein 238 (176 aa).

The disordered stretch occupies residues 1-21 (MAAASPVCGSQASAVGASSPP). Over 1–36 (MAAASPVCGSQASAVGASSPPAPAPAPAAGLGRCRM) the chain is Cytoplasmic. Positions 9-19 (GSQASAVGASS) are enriched in low complexity. A helical membrane pass occupies residues 37–57 (ALLLAVALDVAGMAALLTGVF). Topologically, residues 58–69 (AQLQVRGRDFGD) are extracellular. The helical transmembrane segment at 70-90 (LLIYSGALLVFLSLLGWILWY) threads the bilayer. Residues 91–176 (TGNIEISRQE…GSVAAGTGSE (86 aa)) are Cytoplasmic-facing. Over residues 124–135 (SAPATASPRTTA) the composition is skewed to low complexity. The interval 124-156 (SAPATASPRTTAGLRSARRANRAPQPSSSGSRR) is disordered. A Phosphoserine modification is found at S175.

The protein resides in the membrane. This is Transmembrane protein 238 (Tmem238) from Mus musculus (Mouse).